A 252-amino-acid polypeptide reads, in one-letter code: Transcription factor bHLH117 (252 aa).

The segment at Leu103–Thr141 is disordered. The span at Ser121–Ser134 shows a compositional bias: low complexity. The bHLH domain maps to Ser130 to Leu179.

Homodimer.

The protein resides in the nucleus. The sequence is that of Transcription factor bHLH117 (BHLH117) from Arabidopsis thaliana (Mouse-ear cress).